We begin with the raw amino-acid sequence, 475 residues long: Early growth response protein 1-B (475 aa).

Disordered stretches follow at residues Asn-109–Ile-180 and Pro-264–Ala-285. The span at Ser-111–Ser-140 shows a compositional bias: low complexity. Over residues Gln-170–Ser-179 the composition is skewed to polar residues. 3 C2H2-type zinc fingers span residues Tyr-284 to His-308, Phe-314 to His-336, and Phe-342 to His-364. The interval Asp-355–Ser-379 is disordered. Positions Arg-359 to Asp-369 are enriched in basic residues.

The protein belongs to the EGR C2H2-type zinc-finger protein family.

It is found in the nucleus. The protein localises to the cytoplasm. Functionally, transcriptional regulator. Recognizes and binds to the DNA sequence 5'-GCG(T/G)GGGCG-3'(EGR-site) in the promoter region of target genes. Binds double-stranded target DNA, irrespective of the cytosine methylation status. Regulates the transcription of numerous target genes, and thereby plays an important role in regulating the response to growth factors, DNA damage, and ischemia. Plays a role in the regulation of cell survival, proliferation and cell death. Mediates responses to ischemia and hypoxia; regulates the expression of proteins that are involved in inflammatory processes. Plays a role in regulating the expression of circadian clock genes. This is Early growth response protein 1-B (egr1-b) from Xenopus laevis (African clawed frog).